A 1620-amino-acid chain; its full sequence is NAD-specific glutamate dehydrogenase (1620 aa).

The active site involves Lys851.

This sequence belongs to the Glu/Leu/Phe/Val dehydrogenases family. In terms of assembly, homotetramer. In terms of processing, contains disulfide bonds (interchain).

It carries out the reaction L-glutamate + NAD(+) + H2O = 2-oxoglutarate + NH4(+) + NADH + H(+). Activity subject to allosteric control by arginine and citrate, which function as positive and negative effectors, respectively. In terms of biological role, involved in arginine catabolism by converting L-glutamate, into 2-oxoglutarate, which is then channeled into the tricarboxylic acid cycle. Can also utilize other amino acids of the glutamate family. The polypeptide is NAD-specific glutamate dehydrogenase (gdhB) (Pseudomonas aeruginosa (strain ATCC 15692 / DSM 22644 / CIP 104116 / JCM 14847 / LMG 12228 / 1C / PRS 101 / PAO1)).